The chain runs to 438 residues: Serine hydroxymethyltransferase (438 aa).

(6S)-5,6,7,8-tetrahydrofolate is bound by residues L119 and 123–125 (GHL). K228 carries the N6-(pyridoxal phosphate)lysine modification. Residue 370-372 (SPF) participates in (6S)-5,6,7,8-tetrahydrofolate binding.

It belongs to the SHMT family. Homodimer. Pyridoxal 5'-phosphate serves as cofactor.

Its subcellular location is the cytoplasm. It carries out the reaction (6R)-5,10-methylene-5,6,7,8-tetrahydrofolate + glycine + H2O = (6S)-5,6,7,8-tetrahydrofolate + L-serine. It functions in the pathway one-carbon metabolism; tetrahydrofolate interconversion. The protein operates within amino-acid biosynthesis; glycine biosynthesis; glycine from L-serine: step 1/1. Its function is as follows. Catalyzes the reversible interconversion of serine and glycine with tetrahydrofolate (THF) serving as the one-carbon carrier. This reaction serves as the major source of one-carbon groups required for the biosynthesis of purines, thymidylate, methionine, and other important biomolecules. Also exhibits THF-independent aldolase activity toward beta-hydroxyamino acids, producing glycine and aldehydes, via a retro-aldol mechanism. The sequence is that of Serine hydroxymethyltransferase from Chlorobium chlorochromatii (strain CaD3).